Consider the following 602-residue polypeptide: Potassium-transporting ATPase potassium-binding subunit (602 aa).

The next 10 helical transmembrane spans lie at 3–23 (ANNL…AVPV), 64–84 (QYAL…YALL), 135–155 (GLTV…LALI), 178–198 (LYVL…QGVI), 282–302 (FSNF…CLVF), 313–333 (VAVL…ETSA), 418–438 (GLYG…LMIG), 456–476 (VSIV…IAVL), 522–542 (WMTA…VLAI), and 565–585 (LFVV…YMPA).

This sequence belongs to the KdpA family. As to quaternary structure, the system is composed of three essential subunits: KdpA, KdpB and KdpC.

The protein resides in the cell inner membrane. In terms of biological role, part of the high-affinity ATP-driven potassium transport (or Kdp) system, which catalyzes the hydrolysis of ATP coupled with the electrogenic transport of potassium into the cytoplasm. This subunit binds the periplasmic potassium ions and delivers the ions to the membrane domain of KdpB through an intramembrane tunnel. In Burkholderia mallei (strain ATCC 23344), this protein is Potassium-transporting ATPase potassium-binding subunit.